The primary structure comprises 386 residues: Outer membrane protein assembly factor BamB (386 aa).

Positions 1 to 25 are cleaved as a signal peptide; the sequence is MMRNSRPGRAWRGAVVLTGLLALSG. Cys-26 carries N-palmitoyl cysteine lipidation. Cys-26 carries S-diacylglycerol cysteine lipidation.

The protein belongs to the BamB family. Part of the Bam complex.

The protein resides in the cell outer membrane. Functionally, part of the outer membrane protein assembly complex, which is involved in assembly and insertion of beta-barrel proteins into the outer membrane. The protein is Outer membrane protein assembly factor BamB of Bordetella pertussis (strain Tohama I / ATCC BAA-589 / NCTC 13251).